Consider the following 320-residue polypeptide: 3'-5' exoribonuclease YhaM (320 aa).

Positions 18 to 90 (FLIKSATKAV…QLKIGSIRPT (73 aa)) form a DNA-binding region, OB. Residues 163–279 (HVVCMLNVAK…LHMIDNIDAK (117 aa)) form the HD domain.

The protein belongs to the YhaM family.

Shows a 3'-5' exoribonuclease activity. The polypeptide is 3'-5' exoribonuclease YhaM (Halalkalibacterium halodurans (strain ATCC BAA-125 / DSM 18197 / FERM 7344 / JCM 9153 / C-125) (Bacillus halodurans)).